Consider the following 320-residue polypeptide: Phosphatidylserine decarboxylase proenzyme (320 aa).

Active-site charge relay system; for autoendoproteolytic cleavage activity residues include aspartate 90, histidine 147, and serine 254. Serine 254 functions as the Schiff-base intermediate with substrate; via pyruvic acid; for decarboxylase activity in the catalytic mechanism. The residue at position 254 (serine 254) is a Pyruvic acid (Ser); by autocatalysis. A disordered region spans residues 290–320 (TAAAEPAPLPEEEIRAEHRASPLVDDKQDQG). Basic and acidic residues predominate over residues 301 to 320 (EEIRAEHRASPLVDDKQDQG).

This sequence belongs to the phosphatidylserine decarboxylase family. PSD-B subfamily. Prokaryotic type I sub-subfamily. Heterodimer of a large membrane-associated beta subunit and a small pyruvoyl-containing alpha subunit. Requires pyruvate as cofactor. In terms of processing, is synthesized initially as an inactive proenzyme. Formation of the active enzyme involves a self-maturation process in which the active site pyruvoyl group is generated from an internal serine residue via an autocatalytic post-translational modification. Two non-identical subunits are generated from the proenzyme in this reaction, and the pyruvate is formed at the N-terminus of the alpha chain, which is derived from the carboxyl end of the proenzyme. The autoendoproteolytic cleavage occurs by a canonical serine protease mechanism, in which the side chain hydroxyl group of the serine supplies its oxygen atom to form the C-terminus of the beta chain, while the remainder of the serine residue undergoes an oxidative deamination to produce ammonia and the pyruvoyl prosthetic group on the alpha chain. During this reaction, the Ser that is part of the protease active site of the proenzyme becomes the pyruvoyl prosthetic group, which constitutes an essential element of the active site of the mature decarboxylase.

The protein resides in the cell membrane. It carries out the reaction a 1,2-diacyl-sn-glycero-3-phospho-L-serine + H(+) = a 1,2-diacyl-sn-glycero-3-phosphoethanolamine + CO2. It functions in the pathway phospholipid metabolism; phosphatidylethanolamine biosynthesis; phosphatidylethanolamine from CDP-diacylglycerol: step 2/2. Its function is as follows. Catalyzes the formation of phosphatidylethanolamine (PtdEtn) from phosphatidylserine (PtdSer). In Klebsiella pneumoniae subsp. pneumoniae (strain ATCC 700721 / MGH 78578), this protein is Phosphatidylserine decarboxylase proenzyme.